Consider the following 247-residue polypeptide: MTVFVVFGGHGKVALLFTKIATEAGHIVYNVVRDYVQNEDIEKVHGRTSVCSLEKATPNDIAQFLAEIHPDVVIFAAGAGGKGGPERTRAVDYEGAIKVYDAMRIAGIRRLIMISAIDNRDMSQPPPPYYTAADIELSEKIHQSIGTYYHYKYLADQELVRRSSDIDWTILRPSGMTDEKGSGKVALGKISINCMMSRENVARTVLLFALDNQSIHLVVDMTDGNVPIYKAIAGFVVKGESSYTYSV.

This sequence belongs to the UPF0659 family.

The protein localises to the cytoplasm. It is found in the nucleus. The chain is UPF0659 protein C216.03 from Schizosaccharomyces pombe (strain 972 / ATCC 24843) (Fission yeast).